Reading from the N-terminus, the 391-residue chain is Secreted aspartic protease 1 (391 aa).

A signal peptide spans 1–18 (MFLKNIFIALAIALLVDA). The propeptide at 19–50 (SPAKRSPGFVTLDFDVIKTPVNATGQEGKVKR) is activation peptide. Asn40 carries an N-linked (GlcNAc...) asparagine glycan. Residues 64–377 (YAADITIGSN…DLDDDKISLA (314 aa)) form the Peptidase A1 domain. The active site involves Asp82. 82–84 (DTG) provides a ligand contact to pepstatin A. A disulfide bridge links Cys97 with Cys109. Zn(2+) is bound by residues Asp241 and Asp263. Residue Asp267 is part of the active site. 267 to 271 (DSGTT) lines the pepstatin A pocket. A disulfide bridge links Cys305 with Cys343.

This sequence belongs to the peptidase A1 family. In terms of assembly, monomer.

It localises to the secreted. The enzyme catalyses Preferential cleavage at the carboxyl of hydrophobic amino acids, but fails to cleave 15-Leu-|-Tyr-16, 16-Tyr-|-Leu-17 and 24-Phe-|-Phe-25 of insulin B chain. Activates trypsinogen, and degrades keratin.. With respect to regulation, inhibited by pepstatin A analogs and squash aspartic peptidase inhibitor (SQAPI). In terms of biological role, secreted aspartic peptidases (SAPs) are a group of ten acidic hydrolases considered as key virulence factors. These enzymes supply the fungus with nutrient amino acids as well as are able to degrade the selected host's proteins involved in the immune defense. Induces host inflammatory cytokine production in a proteolytic activity-independent way. Plays a role in tissue damage during superficial infection. Moreover, acts toward human hemoglobin though limited proteolysis to generate a variety of antimicrobial hemocidins, enabling to compete with the other microorganisms of the same physiological niche using the microbicidal peptides generated from the host protein. Its function is as follows. Plays a key role in defense against host by cleaving histatin-5 (Hst 5), a peptide from human saliva that carries out fungicidal activity. The cleavage rate decreases in an order of SAP2 &gt; SAP9 &gt; SAP3 &gt; SAP7 &gt; SAP4 &gt; SAP1 &gt; SAP8. The first cleavage occurs between residues 'Lys-17' and 'His-18' of Hst 5, giving DSHAKRHHGYKRKFHEK and HHSHRGY peptides. Further fragmentation by SAP1 results in AKRHHGYKRKFHEK and AKRHHGY products. This chain is Secreted aspartic protease 1, found in Candida albicans (Yeast).